Consider the following 190-residue polypeptide: Cytoglobin (190 aa).

Residues 1–21 (MEKVPGDMEIERRERNEELSE) are disordered. The Globin domain maps to 18–167 (ELSEAERKAV…IYSHVTAAYK (150 aa)). Cysteine 38 and cysteine 83 form a disulfide bridge. Residues histidine 81 and histidine 113 each coordinate heme b.

The protein belongs to the globin family. Monomeric. Homodimer; disulfide-linked in vitro. Also homooligomeric in vitro. The formation of an intramolecular disulfide bond between cysteines Cys-38 and Cys-83 specifically enhances the nitrite reductase activity. As to expression, widely expressed (at protein level).

The protein localises to the cytoplasm. The protein resides in the nucleus. The catalysed reaction is Fe(II)-heme b-[protein] + nitric oxide + O2 = Fe(III)-heme b-[protein] + nitrate. It catalyses the reaction Fe(III)-heme b-[protein] + nitric oxide + H2O = Fe(II)-heme b-[protein] + nitrite + 2 H(+). The enzyme catalyses 2 superoxide + 2 H(+) = H2O2 + O2. It carries out the reaction H2O2 + AH2 = A + 2 H2O. With respect to regulation, the nitric oxide dioxygenase activity is activated by a reducing system composed of cytochrome b5, its upstream reductase CYB5R3 and NADH. In terms of biological role, probable multifunctional globin with a hexacoordinated heme iron required for the catalysis of various reactions depending on redox condition of the cell as well as oxygen availability. Has a nitric oxide dioxygenase (NOD) activity and is most probably involved in cell-mediated and oxygen-dependent nitric oxide consumption. By scavenging this second messenger may regulate several biological processes including endothelium-mediated vasodilation and vascular tone. Under normoxic conditions functions as a nitric oxide dioxygenase (NOD) but under hypoxic conditions the globin may switch its function to that of a nitrite (NO2) reductase (NiR), generating nitric oxide. Could also have peroxidase and superoxide dismutase activities, detoxifying reactive oxygen species and protecting cells against oxidative stress. Also binds dioxygen with low affinity and could function as an oxygen sensor but has probably no function as a respiratory oxygen carrier. The protein is Cytoglobin of Rattus norvegicus (Rat).